The chain runs to 394 residues: Acetate kinase (394 aa).

Asparagine 10 contributes to the Mg(2+) binding site. An ATP-binding site is contributed by lysine 17. Substrate is bound at residue arginine 87. Catalysis depends on aspartate 144, which acts as the Proton donor/acceptor. Residues 204-208 (HLGNG), 279-281 (DMR), and 327-331 (GIGEN) contribute to the ATP site. Glutamate 381 is a binding site for Mg(2+).

This sequence belongs to the acetokinase family. In terms of assembly, homodimer. Requires Mg(2+) as cofactor. It depends on Mn(2+) as a cofactor.

It localises to the cytoplasm. The catalysed reaction is acetate + ATP = acetyl phosphate + ADP. It functions in the pathway metabolic intermediate biosynthesis; acetyl-CoA biosynthesis; acetyl-CoA from acetate: step 1/2. Its function is as follows. Catalyzes the formation of acetyl phosphate from acetate and ATP. Can also catalyze the reverse reaction. The sequence is that of Acetate kinase from Ectopseudomonas mendocina (strain ymp) (Pseudomonas mendocina).